The following is a 629-amino-acid chain: Probable alpha-L-arabinofuranosidase A (629 aa).

Residues 1–25 form the signal peptide; it reads MVALSTLSGLSALPFLFSLVQNVYG. N-linked (GlcNAc...) asparagine glycosylation is found at Asn36, Asn51, Asn140, Asn152, Asn168, Asn171, Asn260, Asn494, and Asn534.

This sequence belongs to the glycosyl hydrolase 51 family.

The protein localises to the secreted. The enzyme catalyses Hydrolysis of terminal non-reducing alpha-L-arabinofuranoside residues in alpha-L-arabinosides.. The protein operates within glycan metabolism; L-arabinan degradation. Alpha-L-arabinofuranosidase involved in the degradation of arabinoxylan, a major component of plant hemicellulose. Acts only on small linear 1,5-alpha-linked L-arabinofuranosyl oligosaccharides. This chain is Probable alpha-L-arabinofuranosidase A (abfA), found in Aspergillus flavus (strain ATCC 200026 / FGSC A1120 / IAM 13836 / NRRL 3357 / JCM 12722 / SRRC 167).